Here is a 468-residue protein sequence, read N- to C-terminus: MFLATLYFVLPLLDLLMSAEVSGGDRLDCVKASDQCLKEQSCSTKYRTLRQCVAGKETNFSLTSGLEAKDECRSAMEALKQKSLYNCRCKRGMKKEKNCLRIYWSMYQSLQGNDLLEDSPYEPVNSRLSDIFRAVPFISDVFQQVEHISKGNNCLDAAKACNLDDTCKKYRSAYITPCTTSMSNEVCNRRKCHKALRQFFDKVPAKHSYGMLFCSCRDVACTERRRQTIVPVCSYEERERPNCLNLQDSCKTNYICRSRLADFFTNCQPESRSVSNCLKENYADCLLAYSGLIGTVMTPNYIDSSSLSVAPWCDCSNSGNDLEDCLKFLNFFKDNTCLKNAIQAFGNGSDVTMWQPAPPVQTTTATTTTAFRIKNKPLGPAGSENEIPTHVLPPCANLQAQKLKSNVSGSTHLCLSDNDYGKDGLAGASSHITTKSMAAPPSCGLSSLPVMVFTALAALLSVSLAETS.

The signal sequence occupies residues methionine 1–glycine 24. 3 consecutive repeat copies span residues aspartate 25 to asparagine 113, lysine 150 to arginine 238, and glutamate 239 to isoleucine 342. A disulfide bond links cysteine 36 and cysteine 42. A glycan (N-linked (GlcNAc...) asparagine) is linked at asparagine 59. Disulfide bonds link cysteine 154–cysteine 214, cysteine 161–cysteine 167, cysteine 178–cysteine 192, cysteine 187–cysteine 233, cysteine 216–cysteine 221, cysteine 243–cysteine 313, cysteine 250–cysteine 256, cysteine 267–cysteine 285, cysteine 277–cysteine 337, and cysteine 315–cysteine 325. N-linked (GlcNAc...) asparagine glycosylation is found at asparagine 347 and asparagine 406. Serine 430 is lipidated: GPI-anchor amidated serine. The propeptide at histidine 431 to serine 468 is removed in mature form.

This sequence belongs to the GDNFR family. Interacts with GDNF ligand and RET: forms a 2:2:2 ternary complex composed of GDNF ligand, GFRA1 and RET receptor. Interacts with SORL1, either alone or in complex with GDNF. Interaction between SORL1 and GFRA1 leads to GFRA1 internalization, but not degradation. In terms of tissue distribution, expressed in the brain, in hippocampal neurons (at protein level). Isoform 1 and isoform 2 are expressed in heart, brain, lung, liver, kidney and testis.

It localises to the cell membrane. The protein localises to the golgi apparatus. The protein resides in the trans-Golgi network. It is found in the endosome. Its subcellular location is the multivesicular body. Coreceptor for GDNF, a neurotrophic factor that enhances survival and morphological differentiation of dopaminergic neurons and increases their high-affinity dopamine uptake. GDNF-binding leads to autophosphorylation and activation of the RET receptor. This is GDNF family receptor alpha-1 (Gfra1) from Mus musculus (Mouse).